A 56-amino-acid polypeptide reads, in one-letter code: Large ribosomal subunit protein bL32 (56 aa).

The disordered stretch occupies residues 1-34 (MAVQQNKPTRSKRGMRRSHDALTTSTVSVDKASG).

This sequence belongs to the bacterial ribosomal protein bL32 family.

The polypeptide is Large ribosomal subunit protein bL32 (Sodalis glossinidius (strain morsitans)).